Reading from the N-terminus, the 425-residue chain is Elongation factor 1-alpha (425 aa).

The 217-residue stretch at Lys-5–Thr-221 folds into the tr-type G domain. Residues Gly-14–Ser-21 form a G1 region. GTP is bound at residue Gly-14 to Ser-21. Residue Ser-21 coordinates Mg(2+). Residues Gly-70–Asp-74 form a G2 region. Residues Asp-91–Gly-94 are G3. GTP-binding positions include Asp-91–His-95 and Asn-146–Asp-149. The tract at residues Asn-146–Asp-149 is G4. The tract at residues Ser-185–Phe-187 is G5.

Belongs to the TRAFAC class translation factor GTPase superfamily. Classic translation factor GTPase family. EF-Tu/EF-1A subfamily.

It localises to the cytoplasm. The enzyme catalyses GTP + H2O = GDP + phosphate + H(+). GTP hydrolase that promotes the GTP-dependent binding of aminoacyl-tRNA to the A-site of ribosomes during protein biosynthesis. This Methanocorpusculum labreanum (strain ATCC 43576 / DSM 4855 / Z) protein is Elongation factor 1-alpha.